A 571-amino-acid polypeptide reads, in one-letter code: PHD and RING finger domain-containing protein C126.07c (571 aa).

The segment at C18–R79 adopts an RING-type 1; atypical zinc-finger fold. Residues T122–L170 form a PHD-type zinc finger. Residues C125 to V168 form an RING-type 2; degenerate zinc finger. Residues A305–P324 are compositionally biased toward polar residues. Residues A305 to S377 are disordered. Basic residues predominate over residues R346 to I356. A compositionally biased stretch (polar residues) spans S359–S377.

It localises to the cytoplasm. Its subcellular location is the nucleus. This Schizosaccharomyces pombe (strain 972 / ATCC 24843) (Fission yeast) protein is PHD and RING finger domain-containing protein C126.07c.